The following is a 527-amino-acid chain: Type 2 DNA topoisomerase 6 subunit B (527 aa).

Residues Asn-39, Asp-73, 94–95 (SK), 103–110 (GVFGLGLK), and Lys-421 each bind ATP.

This sequence belongs to the TOP6B family. Homodimer. Heterotetramer of two Top6A and two Top6B chains.

The catalysed reaction is ATP-dependent breakage, passage and rejoining of double-stranded DNA.. Functionally, relaxes both positive and negative superturns and exhibits a strong decatenase activity. The sequence is that of Type 2 DNA topoisomerase 6 subunit B from Pyrobaculum aerophilum (strain ATCC 51768 / DSM 7523 / JCM 9630 / CIP 104966 / NBRC 100827 / IM2).